The primary structure comprises 502 residues: Mannitol 2-dehydrogenase (502 aa).

Ile37 to Ala48 contacts NAD(+).

The protein belongs to the mannitol dehydrogenase family. Monomer.

It carries out the reaction D-mannitol + NAD(+) = D-fructose + NADH + H(+). In terms of biological role, catalyzes the NAD(H)-dependent interconversion of D-fructose and D-mannitol in the mannitol metabolic pathway. The protein is Mannitol 2-dehydrogenase of Emericella nidulans (strain FGSC A4 / ATCC 38163 / CBS 112.46 / NRRL 194 / M139) (Aspergillus nidulans).